Here is a 193-residue protein sequence, read N- to C-terminus: Recombination protein RecR (193 aa).

A C4-type zinc finger spans residues 61–76; that stretch reads CTSCNALSESEVCEIC. The Toprim domain maps to 84-170; sequence SQLCMVLHPR…TFTKIAQGVP (87 aa).

This sequence belongs to the RecR family.

Functionally, may play a role in DNA repair. It seems to be involved in an RecBC-independent recombinational process of DNA repair. It may act with RecF and RecO. The polypeptide is Recombination protein RecR (Helicobacter pylori (strain HPAG1)).